The chain runs to 489 residues: Siroheme synthase (489 aa).

Residues 1-203 (MDFFPVFMRL…GREDAARETL (203 aa)) form a precorrin-2 dehydrogenase /sirohydrochlorin ferrochelatase region. NAD(+) is bound by residues 22–23 (PV) and 43–44 (PA). A uroporphyrinogen-III C-methyltransferase region spans residues 218-489 (GEVFLVGAGP…ARSSTEGAEA (272 aa)). Pro227 contributes to the S-adenosyl-L-methionine binding site. Asp250 acts as the Proton acceptor in catalysis. Lys272 acts as the Proton donor in catalysis. S-adenosyl-L-methionine contacts are provided by residues 303–305 (GGD), Ile308, 333–334 (TA), Met385, and Gly414.

In the N-terminal section; belongs to the precorrin-2 dehydrogenase / sirohydrochlorin ferrochelatase family. It in the C-terminal section; belongs to the precorrin methyltransferase family.

It catalyses the reaction uroporphyrinogen III + 2 S-adenosyl-L-methionine = precorrin-2 + 2 S-adenosyl-L-homocysteine + H(+). It carries out the reaction precorrin-2 + NAD(+) = sirohydrochlorin + NADH + 2 H(+). The enzyme catalyses siroheme + 2 H(+) = sirohydrochlorin + Fe(2+). It participates in cofactor biosynthesis; adenosylcobalamin biosynthesis; precorrin-2 from uroporphyrinogen III: step 1/1. The protein operates within cofactor biosynthesis; adenosylcobalamin biosynthesis; sirohydrochlorin from precorrin-2: step 1/1. Its pathway is porphyrin-containing compound metabolism; siroheme biosynthesis; precorrin-2 from uroporphyrinogen III: step 1/1. It functions in the pathway porphyrin-containing compound metabolism; siroheme biosynthesis; siroheme from sirohydrochlorin: step 1/1. It participates in porphyrin-containing compound metabolism; siroheme biosynthesis; sirohydrochlorin from precorrin-2: step 1/1. Multifunctional enzyme that catalyzes the SAM-dependent methylations of uroporphyrinogen III at position C-2 and C-7 to form precorrin-2 via precorrin-1. Then it catalyzes the NAD-dependent ring dehydrogenation of precorrin-2 to yield sirohydrochlorin. Finally, it catalyzes the ferrochelation of sirohydrochlorin to yield siroheme. The protein is Siroheme synthase of Thioalkalivibrio sulfidiphilus (strain HL-EbGR7).